Here is a 309-residue protein sequence, read N- to C-terminus: UDP-N-acetylenolpyruvoylglucosamine reductase (309 aa).

The FAD-binding PCMH-type domain occupies 34 to 199 (RVGGPAQVLF…TSARLRGTPA (166 aa)). Arginine 179 is an active-site residue. The active-site Proton donor is the serine 228. Glutamate 298 is a catalytic residue.

This sequence belongs to the MurB family. FAD serves as cofactor.

The protein resides in the cytoplasm. The catalysed reaction is UDP-N-acetyl-alpha-D-muramate + NADP(+) = UDP-N-acetyl-3-O-(1-carboxyvinyl)-alpha-D-glucosamine + NADPH + H(+). Its pathway is cell wall biogenesis; peptidoglycan biosynthesis. Its function is as follows. Cell wall formation. This Rhodopseudomonas palustris (strain ATCC BAA-98 / CGA009) protein is UDP-N-acetylenolpyruvoylglucosamine reductase.